The chain runs to 191 residues: Akirin-1 (191 aa).

Residues 17-70 form a disordered region; the sequence is LLSPGSPKRRRCAPLPGPTPGLRPPDAEPPPLQMQTPPASLQQPAPPGSERRLP. At Ser-22 the chain carries Phosphoserine. A Nuclear localization signal motif is present at residues 23–28; that stretch reads PKRRRC. A compositionally biased stretch (pro residues) spans 31–48; the sequence is LPGPTPGLRPPDAEPPPL. The span at 49–59 shows a compositional bias: polar residues; the sequence is QMQTPPASLQQ. Thr-71 carries the phosphothreonine modification. The SYVS motif signature appears at 188-191; the sequence is SYVS.

It belongs to the akirin family. As to expression, expressed in macrophages and satellite cells.

It is found in the nucleus. Molecular adapter that acts as a bridge between proteins, and which is involved skeletal muscle development. Functions as a signal transducer for MSTN during skeletal muscle regeneration and myogenesis. May regulate chemotaxis of both macrophages and myoblasts by reorganising actin cytoskeleton, leading to more efficient lamellipodia formation via a PI3 kinase dependent pathway. In contrast to AKIRIN2, not involved in nuclear import of proteasomes. The sequence is that of Akirin-1 from Mus musculus (Mouse).